The primary structure comprises 1100 residues: Formin-like protein 1 (1100 aa).

A compositionally biased stretch (low complexity) spans 1-13; the sequence is MGNAAGSAEQPAG. Disordered regions lie at residues 1-31, 167-200, 446-474, and 510-635; these read MGNA…PMPA, STDN…PKSR, RFSE…TRPS, and TPSG…AKKP. Gly2 carries the N-myristoyl glycine lipid modification. Ser7 is subject to Phosphoserine. The span at 14 to 28 shows a compositional bias: pro residues; the sequence is PAAPPPKQPAPPKQP. The GBD/FH3 domain maps to 27–468; that stretch reads QPMPAAGELE…PPEPEKAPPA (442 aa). Ser184 is modified (phosphoserine). Residues 517-538 are compositionally biased toward low complexity; the sequence is PTPGVPTGSPSPDLAPAAEPAP. Positions 539–615 are enriched in pro residues; that stretch reads GAAPPPPPPL…PPPPPPPGGP (77 aa). A phosphoserine mark is found at Ser624 and Ser693. Residues 632-1023 form the FH2 domain; it reads AKKPIQTKFR…QEAGADTPGK (392 aa). The tract at residues 1008–1037 is disordered; sequence KKEAAAQEAGADTPGKGEPPAPKSPPKARR. The span at 1013 to 1023 shows a compositional bias: low complexity; it reads AQEAGADTPGK. Position 1031 is a phosphoserine (Ser1031). In terms of domain architecture, DAD spans 1059 to 1090; the sequence is SDRDGAIEDIITVIKTVPFTARTGKRTSRLLC.

Belongs to the formin homology family. In terms of assembly, interacts with RAC1, PFN1 and PFN2. Interacts (activated by RAC1) with SRGAP2 (via SH3 domain); regulates the actin filament severing activity of FMNL1. In terms of processing, myristoylation mediates membrane localization and blebbing. As to expression, expressed in heart, brain, placenta, lung, liver, skeletal muscle, kidney and pancreas.

It is found in the cytoplasm. The protein localises to the cell membrane. The protein resides in the cytoplasmic vesicle. Its subcellular location is the phagosome. It localises to the cell cortex. It is found in the cell projection. The protein localises to the bleb. Functionally, may play a role in the control of cell motility and survival of macrophages. Plays a role in the regulation of cell morphology and cytoskeletal organization. Required in the cortical actin filament dynamics and cell shape. The polypeptide is Formin-like protein 1 (FMNL1) (Homo sapiens (Human)).